A 429-amino-acid chain; its full sequence is Small ribosomal subunit protein bS1 (429 aa).

4 consecutive S1 motif domains span residues 55–128, 144–211, 231–299, and 316–385; these read GDVV…LSKK, GDTV…SRKA, GEVV…LSIK, and GSVL…LSMK. Positions 382–399 are enriched in basic and acidic residues; it reads LSMKALEEKPEREDRRGN. The tract at residues 382 to 412 is disordered; the sequence is LSMKALEEKPEREDRRGNDGSASRADIAAYK.

It belongs to the bacterial ribosomal protein bS1 family.

Functionally, binds mRNA; thus facilitating recognition of the initiation point. It is needed to translate mRNA with a short Shine-Dalgarno (SD) purine-rich sequence. In Leuconostoc lactis, this protein is Small ribosomal subunit protein bS1 (rps1).